A 301-amino-acid polypeptide reads, in one-letter code: uncharacterized protein (301 aa).

Residues 1-58 enclose the HTH lysR-type domain; the sequence is MDIRHLTYFLEVARLKSFTKASQSLYVSQPTISKMIKNLEEELGIELFYRNGRQVELT. The segment at residues 18–37 is a DNA-binding region (H-T-H motif); it reads FTKASQSLYVSQPTISKMIK.

This sequence belongs to the LysR transcriptional regulatory family.

This is an uncharacterized protein from Bacillus subtilis (strain 168).